An 863-amino-acid chain; its full sequence is Receptor-like protein 9DC1 (863 aa).

The first 21 residues, 1-21 (MGCVKLVFFMLYVFLFQLVSS), serve as a signal peptide directing secretion. The Extracellular segment spans residues 22 to 812 (SSLPHLCPED…EEDSPMISWQ (791 aa)). Positions 24–90 (LPHLCPEDQA…GVHCDETTGQ (67 aa)) are N-cap. N-linked (GlcNAc...) asparagine glycosylation is found at N71 and N108. An LRR 1; degenerate repeat occupies 91-114 (VIALDLRCSQLQGKFHSNSSLFQL). 2 LRR repeats span residues 115-138 (SNLK…KFGE) and 140-163 (SDLT…ISHL). The LRR 4; degenerate repeat unit spans residues 164-190 (SKLHVLLIGDQYGLSIVPHNFEPLLKN). Residues N190, N203, and N211 are each glycosylated (N-linked (GlcNAc...) asparagine). LRR repeat units follow at residues 191–213 (LTQL…SNFS), 214–237 (SHLT…VFHL), 240–262 (LEFL…KWNS), 264–286 (ASLM…SFSH), 287–311 (LTSL…LWNL), and 312–336 (TNIE…IFEK). N261 carries N-linked (GlcNAc...) asparagine glycosylation. N-linked (GlcNAc...) asparagine glycans are attached at residues N299 and N310. The stretch at 337–357 (LKKLSLFRNDNLDGGLEFLSF) is one LRR 11; degenerate repeat. 15 LRR repeats span residues 358–382 (NTQL…ISGL), 383–406 (QNLE…IFSL), 408–428 (SLVE…EFKS), 429–452 (KTLS…LLNQ), 454–476 (NLQL…ICNL), 477–500 (KTLI…VVER), 502–524 (EYLS…TFSV), 525–549 (GNIL…MINC), 551–572 (YLTL…WLGY), 573–597 (LFQL…GNTN), 599–623 (FMGL…ILGN), 667–690 (LDSN…IIGD), 691–714 (LVGL…SFQN), 715–739 (LSVL…LASL), and 741–759 (FLEV…IPKG). N-linked (GlcNAc...) asparagine glycans are attached at residues N378, N396, and N416. A glycan (N-linked (GlcNAc...) asparagine) is linked at N464. N519 carries N-linked (GlcNAc...) asparagine glycosylation. A glycan (N-linked (GlcNAc...) asparagine) is linked at N563. 3 N-linked (GlcNAc...) asparagine glycosylation sites follow: N674, N698, and N714. N-linked (GlcNAc...) asparagine glycans are attached at residues N746 and N767. The interval 760-812 (KQFDSFGNTSYQGNDGLRGFPLSKLCGGEDQVTTPAELDQEEEEEDSPMISWQ) is C-cap/acidic domain. Residues 813–833 (GVLVGYGCGLVIGLSVIYIMW) traverse the membrane as a helical segment. Over 834-863 (STQYPAWFSRMDLKLEHIITTKMKKHKKRY) the chain is Cytoplasmic.

This sequence belongs to the RLP family.

It localises to the cell membrane. Its function is as follows. Involved in plant defense. Confers resistance to the fungal pathogen C.fulvum through recognition of the AVR9 elicitor protein. The sequence is that of Receptor-like protein 9DC1 from Solanum pimpinellifolium (Currant tomato).